A 149-amino-acid chain; its full sequence is Deoxyuridine 5'-triphosphate nucleotidohydrolase (149 aa).

Substrate is bound by residues 68–70 (RSG), Asn-81, and 85–87 (LID).

Belongs to the dUTPase family. It depends on Mg(2+) as a cofactor.

The enzyme catalyses dUTP + H2O = dUMP + diphosphate + H(+). It functions in the pathway pyrimidine metabolism; dUMP biosynthesis; dUMP from dCTP (dUTP route): step 2/2. Functionally, this enzyme is involved in nucleotide metabolism: it produces dUMP, the immediate precursor of thymidine nucleotides and it decreases the intracellular concentration of dUTP so that uracil cannot be incorporated into DNA. The chain is Deoxyuridine 5'-triphosphate nucleotidohydrolase from Azoarcus sp. (strain BH72).